The sequence spans 306 residues: MQLSKAAEMCYEITNSYLHIDQKSQIIASTQEAIRLTRKYLLSEIFVRWSPLNGEISFSYNGGKDCQVLLLLYLSCLWEYFFIKAQNSQFDFEFQSFPMQRLPTVFIDQEETFPTLENFVLETSERYCLSLYESQRQSGASVNMADAFRDFIKIYPETEAIVIGIRHTDPFGEALKPIQRTDSNWPDFMRLQPLLHWDLTNIWSFLLYSNEPICGLYGKGFTSIGGINNSLPNPHLRKDSNNPALHFEWEIIHAFGKDAEGERSSAINTSPISVVDKERFSKYHDNYYPGWYLVDDTLERAGRIKN.

Residues serine 59, isoleucine 107, glycine 164, 182–185 (DSNW), arginine 190, and arginine 300 contribute to the FAD site.

The protein belongs to the PAPS reductase family. FAD1 subfamily.

The protein resides in the cytoplasm. The enzyme catalyses FMN + ATP + H(+) = FAD + diphosphate. It participates in cofactor biosynthesis; FAD biosynthesis; FAD from FMN: step 1/1. Catalyzes the adenylation of flavin mononucleotide (FMN) to form flavin adenine dinucleotide (FAD) coenzyme. This Saccharomyces cerevisiae (strain ATCC 204508 / S288c) (Baker's yeast) protein is Flavin adenine dinucleotide synthase.